Here is a 391-residue protein sequence, read N- to C-terminus: Serpin-ZX (391 aa).

An RCL region spans residues 337 to 361 (GTEAAAASAGVIKLRGLLMEEDEID). Asn375 carries N-linked (GlcNAc...) asparagine glycosylation.

The protein belongs to the serpin family. In terms of assembly, interacts with RD21A. As to expression, expressed in root tips. Expressed in siliques (at protein level).

The protein resides in the secreted. It localises to the extracellular space. Its subcellular location is the apoplast. The protein localises to the cytoplasm. Inhibits metacaspase-9 (MC9) cysteine protease. Functions through cleavage of its reactive center loop and covalent binding to MC9. Involved in the control of elicitor-stimulated programmed cell death (PCD). During infection by the necrotrophic fungal pathogen Botrytis cinerea, functions to protect cells by limiting the PCD-promoting protease RD21A activity that is released from the ER body or vacuole to the cytoplasm. Involved in the control of water stress-induced cell death by limiting the pro-death protease RD21A activity that is released from the vacuole to the cytoplasm. This chain is Serpin-ZX, found in Arabidopsis thaliana (Mouse-ear cress).